A 455-amino-acid polypeptide reads, in one-letter code: Probable glycine dehydrogenase (decarboxylating) subunit 1 (455 aa).

The protein belongs to the GcvP family. N-terminal subunit subfamily. In terms of assembly, the glycine cleavage system is composed of four proteins: P, T, L and H. In this organism, the P 'protein' is a heterodimer of two subunits.

The catalysed reaction is N(6)-[(R)-lipoyl]-L-lysyl-[glycine-cleavage complex H protein] + glycine + H(+) = N(6)-[(R)-S(8)-aminomethyldihydrolipoyl]-L-lysyl-[glycine-cleavage complex H protein] + CO2. The glycine cleavage system catalyzes the degradation of glycine. The P protein binds the alpha-amino group of glycine through its pyridoxal phosphate cofactor; CO(2) is released and the remaining methylamine moiety is then transferred to the lipoamide cofactor of the H protein. The polypeptide is Probable glycine dehydrogenase (decarboxylating) subunit 1 (Saccharolobus islandicus (strain M.16.27) (Sulfolobus islandicus)).